The sequence spans 81 residues: Small ribosomal subunit protein uS15 (81 aa).

This sequence belongs to the universal ribosomal protein uS15 family. In terms of assembly, part of the 30S ribosomal subunit. Forms a bridge to the 50S subunit in the 70S ribosome, contacting the 23S rRNA.

Its function is as follows. One of the primary rRNA binding proteins, it binds directly to 16S rRNA where it helps nucleate assembly of the platform of the 30S subunit by binding and bridging several RNA helices of the 16S rRNA. Forms an intersubunit bridge (bridge B4) with the 23S rRNA of the 50S subunit in the ribosome. The protein is Small ribosomal subunit protein uS15 of Mesomycoplasma hyorhinis (Mycoplasma hyorhinis).